We begin with the raw amino-acid sequence, 162 residues long: Putative 4-hydroxy-4-methyl-2-oxoglutarate aldolase (162 aa).

Substrate-binding positions include 75–78 and Arg-97; that span reads GDML. A divalent metal cation is bound at residue Asp-98.

This sequence belongs to the class II aldolase/RraA-like family. In terms of assembly, homotrimer. Requires a divalent metal cation as cofactor.

The catalysed reaction is 4-hydroxy-4-methyl-2-oxoglutarate = 2 pyruvate. The enzyme catalyses oxaloacetate + H(+) = pyruvate + CO2. In terms of biological role, catalyzes the aldol cleavage of 4-hydroxy-4-methyl-2-oxoglutarate (HMG) into 2 molecules of pyruvate. Also contains a secondary oxaloacetate (OAA) decarboxylase activity due to the common pyruvate enolate transition state formed following C-C bond cleavage in the retro-aldol and decarboxylation reactions. This chain is Putative 4-hydroxy-4-methyl-2-oxoglutarate aldolase, found in Ectopseudomonas mendocina (strain ymp) (Pseudomonas mendocina).